Consider the following 181-residue polypeptide: HGPRTase-like protein 2 (181 aa).

This sequence belongs to the purine/pyrimidine phosphoribosyltransferase family. Archaeal HPRT subfamily.

May catalyze a purine salvage reaction, the substrate is unknown. The protein is HGPRTase-like protein 2 of Natrialba magadii (strain ATCC 43099 / DSM 3394 / CCM 3739 / CIP 104546 / IAM 13178 / JCM 8861 / NBRC 102185 / NCIMB 2190 / MS3) (Natronobacterium magadii).